The sequence spans 66 residues: Large ribosomal subunit protein uL29 (66 aa).

This sequence belongs to the universal ribosomal protein uL29 family.

This chain is Large ribosomal subunit protein uL29, found in Bacillus anthracis (strain CDC 684 / NRRL 3495).